We begin with the raw amino-acid sequence, 353 residues long: Small ribosomal subunit protein uS2 (353 aa).

Positions 256-353 (DTDEQSSAAN…TPAESTDEQA (98 aa)) are disordered. Composition is skewed to low complexity over residues 263-311 (AANT…AEAP) and 321-339 (ESAT…TPAE). Over residues 340–353 (AEAETPAESTDEQA) the composition is skewed to acidic residues.

It belongs to the universal ribosomal protein uS2 family.

This chain is Small ribosomal subunit protein uS2, found in Beutenbergia cavernae (strain ATCC BAA-8 / DSM 12333 / CCUG 43141 / JCM 11478 / NBRC 16432 / NCIMB 13614 / HKI 0122).